The sequence spans 182 residues: Large ribosomal subunit protein uL6 (182 aa).

The protein belongs to the universal ribosomal protein uL6 family. Part of the 50S ribosomal subunit.

Its function is as follows. This protein binds to the 23S rRNA, and is important in its secondary structure. It is located near the subunit interface in the base of the L7/L12 stalk, and near the tRNA binding site of the peptidyltransferase center. This Methanococcus maripaludis (strain C6 / ATCC BAA-1332) protein is Large ribosomal subunit protein uL6.